A 118-amino-acid chain; its full sequence is Ribosome-binding factor A (118 aa).

The protein belongs to the RbfA family. As to quaternary structure, monomer. Binds 30S ribosomal subunits, but not 50S ribosomal subunits or 70S ribosomes.

It localises to the cytoplasm. Its function is as follows. One of several proteins that assist in the late maturation steps of the functional core of the 30S ribosomal subunit. Associates with free 30S ribosomal subunits (but not with 30S subunits that are part of 70S ribosomes or polysomes). Required for efficient processing of 16S rRNA. May interact with the 5'-terminal helix region of 16S rRNA. This chain is Ribosome-binding factor A, found in Bacillus cereus (strain AH820).